The primary structure comprises 592 residues: Anaphase-promoting complex subunit 8 (592 aa).

TPR repeat units lie at residues 66–99, 160–193, 291–324, 359–392, 393–426, 428–460, 461–494, and 496–528; these read EYYK…QLPI, QQQQ…NKKD, TYIL…EPNR, PETC…NDRY, LSAW…NPRD, RAWY…RPYD, PRMW…YDRE, and VAIN…CDQE. Residues 129 to 166 form a disordered region; it reads QQQAQQQAQQAQQESQQNDKNNDTNNNNKTDQQQQQQQ.

The protein belongs to the APC8/CDC23 family. As to quaternary structure, the APC/C is composed of at least 13 subunits that stay tightly associated throughout the cell cycle: anapc1, anapc2, anapc3, anapc4, anapc5, anapc6, anapc7, anapc8, anapc10, anapc11, cdc20, cdc26 and cdh1.

The protein resides in the nucleus. Its pathway is protein modification; protein ubiquitination. Component of the anaphase promoting complex/cyclosome (APC/C), a cell cycle-regulated E3 ubiquitin-protein ligase complex that controls progression through mitosis and the G1 phase of the cell cycle. This chain is Anaphase-promoting complex subunit 8 (anapc8), found in Dictyostelium discoideum (Social amoeba).